A 313-amino-acid chain; its full sequence is Postacrosomal sheath WW domain-binding protein (313 aa).

One can recognise a GRAM domain in the interval 8–87 (TESRRGALIP…GLMSDCTIEQ (80 aa)). Repeat copies occupy residues 179-185 (YGPPPPG), 193-199 (YGTPPEG), 207-213 (YGAPPMG), 214-220 (YGAPPVG), 221-227 (YGVPPGG), 228-234 (YGVPPGG), 235-241 (YGVPPGG), 242-248 (YGAPPGG), 249-255 (YGVPPGG), 256-262 (YGAPPGG), 263-269 (YGAPPAG), and 270-276 (YGAPPAG). The interval 179–276 (YGPPPPGYTV…PAGYGAPPAG (98 aa)) is 12 X 7 AA tandem repeat of Y-G-X-P-P-X-G. The short motif at 183–186 (PPGY) is the PPxY motif 1 element. Over residues 254–264 (GGYGAPPGGYG) the composition is skewed to gly residues. Residues 254–313 (GGYGAPPGGYGAPPAGYGAPPAGNEALPPAYEAPSAGNTAASHRSMTAQQETSLPTTSSS) form a disordered region. Positions 265–276 (APPAGYGAPPAG) are enriched in low complexity. A PPxY motif 2 motif is present at residues 281-284 (PPAY). Positions 289–313 (AGNTAASHRSMTAQQETSLPTTSSS) are enriched in polar residues.

In terms of tissue distribution, expressed in testis.

Functionally, may play a role in meiotic resumption and pronuclear formation, mediated by a WW domain-signaling pathway during fertilization. The protein is Postacrosomal sheath WW domain-binding protein (WBP2NL) of Bos taurus (Bovine).